The sequence spans 1909 residues: Receptor-type tyrosine-protein phosphatase F (1909 aa).

Residues 1–31 form the signal peptide; sequence MVPNTCTSVPLLPVGLPLLLLLSCIQFSSQA. Over 32–1266 the chain is Extracellular; sequence DSLPNFVRSP…RSVDQPEMLW (1235 aa). Ig-like C2-type domains lie at 35 to 125, 137 to 225, and 233 to 315; these read PNFV…AKLT, PTID…ANLY, and PRFS…AQVS. The cysteines at positions 56 and 109 are disulfide-linked. 68-77 is a heparin binding site; sequence WMKKGKKVSS. N119 carries N-linked (GlcNAc...) asparagine glycosylation. A disulfide bridge links C158 with C208. 2 N-linked (GlcNAc...) asparagine glycosylation sites follow: N251 and N296. A disulfide bond links C254 and C299. Fibronectin type-III domains are found at residues 322–412, 417–511, 515–604, 609–706, 711–819, 820–914, 918–1013, and 1014–1098; these read PPTS…TGEQ, PPLH…TQQG, QPSS…TAQS, PPQD…TNED, PPRK…TTGA, VPGK…PEDV, FPLN…TSPA, and FATS…TAPD. Residues 399-418 form a disordered region; it reads GPPSEPVETRTGEQAPSSPP. N721 is a glycosylation site (N-linked (GlcNAc...) asparagine). N963 and N966 each carry an N-linked (GlcNAc...) asparagine glycan. The chain crosses the membrane as a helical span at residues 1267-1287; that stretch reads VMGPVLAVVLIIIIVIAILLF. Residues 1288 to 1909 lie on the Cytoplasmic side of the membrane; the sequence is KRKRASPLPK…YLGSFDHYAT (622 aa). 2 consecutive Tyrosine-protein phosphatase domains span residues 1354–1609 and 1641–1900; these read FSQE…LLEA and MELE…ALEY. Residues D1518, 1550 to 1556, and Q1594 contribute to the substrate site; that span reads CSAGVGR. The active-site Phosphocysteine intermediate is C1550. C1841 serves as the catalytic Phosphocysteine intermediate.

This sequence belongs to the protein-tyrosine phosphatase family. Receptor class 2A subfamily.

It localises to the membrane. The catalysed reaction is O-phospho-L-tyrosyl-[protein] + H2O = L-tyrosyl-[protein] + phosphate. Possible cell adhesion receptor. It possesses an intrinsic protein tyrosine phosphatase activity (PTPase). Functionally, the first PTPase domain has enzymatic activity, while the second one seems to affect the substrate specificity of the first one. In Danio rerio (Zebrafish), this protein is Receptor-type tyrosine-protein phosphatase F (ptprf).